A 61-amino-acid polypeptide reads, in one-letter code: Alpha-conotoxin-like Sm1.1 (61 aa).

The first 16 residues, 1–16 (MFTVFLLVVLATTVVS), serve as a signal peptide directing secretion. A propeptide spanning residues 17 to 43 (FPSDRASDGRDDEAKDERSDMHESGRK) is cleaved from the precursor. The segment at 19–46 (SDRASDGRDDEAKDERSDMHESGRKGRG) is disordered. A compositionally biased stretch (basic and acidic residues) spans 21 to 42 (RASDGRDDEAKDERSDMHESGR). Intrachain disulfides connect cysteine 48-cysteine 53 and cysteine 49-cysteine 59. Proline 55 carries the 4-hydroxyproline; partial modification. Cysteine 59 bears the Cysteine amide mark.

The protein belongs to the conotoxin A superfamily. As to expression, expressed by the venom duct.

It is found in the secreted. Functionally, alpha-conotoxins act on postsynaptic membranes, they bind to the nicotinic acetylcholine receptors (nAChR) and thus inhibit them. The protein is Alpha-conotoxin-like Sm1.1 of Conus stercusmuscarum (Fly-specked cone).